A 1249-amino-acid chain; its full sequence is MAGE-like protein 2 (1249 aa).

A compositionally biased stretch (polar residues) spans 1–10 (MSQLSKNLGD). Disordered regions lie at residues 1–50 (MSQL…PPID), 134–233 (APGA…AQPP), 300–327 (QPPA…QPMA), 349–378 (PQVP…WQAT), 410–433 (RQGP…VRQA), 515–569 (QALP…LPAP), 647–679 (QPFQ…EVPT), 714–746 (LMTP…RAPS), 862–910 (PQAT…DWQG), and 930–957 (VSGD…ILSG). 2 stretches are compositionally biased toward pro residues: residues 40–49 (PPVPWDPPPI) and 140–233 (AHPP…AQPP). The segment covering 301 to 311 (PPASGAPMAQP) has biased composition (low complexity). Pro residues-rich tracts occupy residues 312-324 (AAPP…PPAQ) and 349-358 (PQVPQGPQAP). A compositionally biased stretch (polar residues) spans 369–378 (QATSPGWQAT). Pro residues predominate over residues 410 to 432 (RQGPPPIRPGPPPIRPGPPPVRQ). The segment covering 525 to 552 (QAPQARLPAPQVQAAPQVPTAPPATQVP) has biased composition (low complexity). The segment covering 553–567 (AAPPAGPQVPQPVLP) has biased composition (pro residues). The span at 662 to 675 (QLPPQQAQASGPQA) shows a compositional bias: low complexity. Basic and acidic residues predominate over residues 725–746 (SIDRRGSSKERRTSSKERRAPS). Positions 862-871 (PQATATTQEA) are enriched in low complexity. Residues 881 to 891 (RSGKATRKKKH) show a composition bias toward basic residues. An MAGE domain is found at 1020 to 1219 (LDERANALVQ…QSWPFHYLEA (200 aa)). Residues 1226–1235 (EDTDEDEPDT) are compositionally biased toward acidic residues. Residues 1226–1249 (EDTDEDEPDTGDSAHGPTSRPPPR) form a disordered region.

In terms of assembly, part of a complex consisting of MAGEL2, TRIM27 and USP7; directly interacts with USP7. Interacts with TRIM27. Interacts with VPS35; leading to recruitment at retromer-containing endosomes. Interacts with BMAL1 and PER2. Expressed in placenta, fetal and adult brain. Not detected in heart and small intestine, very low levels in fibroblasts. Not expressed in brain of a Prader-Willi patient.

It localises to the early endosome. Its subcellular location is the cytoplasm. The protein resides in the nucleus. Its function is as follows. Probably enhances ubiquitin ligase activity of RING-type zinc finger-containing E3 ubiquitin-protein ligases, possibly through recruitment and/or stabilization of the Ubl-conjugating enzyme (E2) at the E3:substrate complex. Acts as a regulator of retrograde transport via its interaction with VPS35. Recruited to retromer-containing endosomes and promotes the formation of 'Lys-63'-linked polyubiquitin chains at 'Lys-220' of WASHC1 together with TRIM27, leading to promote endosomal F-actin assembly. Regulates the circadian clock by repressing the transcriptional activator activity of the CLOCK-BMAL1 heterodimer. Significantly promotes the cytoplasmic accumulation of CLOCK. This is MAGE-like protein 2 (MAGEL2) from Homo sapiens (Human).